Reading from the N-terminus, the 480-residue chain is UDP-N-acetylmuramate--L-alanine ligase (480 aa).

129-135 (GTHGKTT) provides a ligand contact to ATP.

It belongs to the MurCDEF family.

It localises to the cytoplasm. It catalyses the reaction UDP-N-acetyl-alpha-D-muramate + L-alanine + ATP = UDP-N-acetyl-alpha-D-muramoyl-L-alanine + ADP + phosphate + H(+). It participates in cell wall biogenesis; peptidoglycan biosynthesis. Functionally, cell wall formation. This is UDP-N-acetylmuramate--L-alanine ligase from Mannheimia succiniciproducens (strain KCTC 0769BP / MBEL55E).